Here is a 292-residue protein sequence, read N- to C-terminus: MTHQDQLHRYLFEDYAVRGELVSLQETYRQVLGQHNYPPAVKTLLGELLVATSLLTATLKFTSEITVQLQGDGPLRLAVINGDDRQNMRGLACINGDIADDATLAQMVGNGYLVITLTPAEGERYQGVVGLEGPRLADCLENYFLQSEQLPTRLFIRTGEYQGEVAAAGLLLQVLPGQDAHADDFDHLAQLTATVKGDELFALPANDVLYRLYHQDNVTVYPAQSVQFLCTCSRQRCADALMTLGEQELHDMLEQDGEVDMHCDFCGSHYRFDADAIADLQQQAAQGYSPQA.

2 disulfide bridges follow: Cys-230–Cys-232 and Cys-263–Cys-266.

It belongs to the HSP33 family. Under oxidizing conditions two disulfide bonds are formed involving the reactive cysteines. Under reducing conditions zinc is bound to the reactive cysteines and the protein is inactive.

The protein localises to the cytoplasm. In terms of biological role, redox regulated molecular chaperone. Protects both thermally unfolding and oxidatively damaged proteins from irreversible aggregation. Plays an important role in the bacterial defense system toward oxidative stress. In Sodalis glossinidius (strain morsitans), this protein is 33 kDa chaperonin.